Here is a 285-residue protein sequence, read N- to C-terminus: 4-diphosphocytidyl-2-C-methyl-D-erythritol kinase (285 aa).

Residue Lys10 is part of the active site. 92–102 (PFGAGLGGGSS) lines the ATP pocket. Asp134 is an active-site residue.

Belongs to the GHMP kinase family. IspE subfamily.

It carries out the reaction 4-CDP-2-C-methyl-D-erythritol + ATP = 4-CDP-2-C-methyl-D-erythritol 2-phosphate + ADP + H(+). Its pathway is isoprenoid biosynthesis; isopentenyl diphosphate biosynthesis via DXP pathway; isopentenyl diphosphate from 1-deoxy-D-xylulose 5-phosphate: step 3/6. Functionally, catalyzes the phosphorylation of the position 2 hydroxy group of 4-diphosphocytidyl-2C-methyl-D-erythritol. In Chloroherpeton thalassium (strain ATCC 35110 / GB-78), this protein is 4-diphosphocytidyl-2-C-methyl-D-erythritol kinase.